A 338-amino-acid polypeptide reads, in one-letter code: Selenocysteine methyltransferase (338 aa).

One can recognise a Hcy-binding domain in the interval methionine 1–leucine 327. Residues cysteine 245, cysteine 312, and cysteine 313 each contribute to the Zn(2+) site.

In terms of assembly, monomer. Zn(2+) is required as a cofactor. In terms of tissue distribution, present in all tissues tested.

It carries out the reaction S-methyl-L-methionine + L-selenocysteine = Se-methyl-L-selenocysteine + L-methionine + H(+). Functionally, catalyzes the methylation of selenocysteine with S-methylmethionine as donor. Does not methylate cysteine. The polypeptide is Selenocysteine methyltransferase (SMTA) (Astragalus bisulcatus (Two-grooved milkvetch)).